The primary structure comprises 188 residues: Phosphoribosylglycinamide formyltransferase (188 aa).

N(1)-(5-phospho-beta-D-ribosyl)glycinamide is bound at residue 12 to 14; it reads GSN. (6R)-10-formyltetrahydrofolate is bound by residues Lys-66, 91–94, and Asn-108; that span reads MRLI. His-110 serves as the catalytic Proton donor.

Belongs to the GART family.

It carries out the reaction N(1)-(5-phospho-beta-D-ribosyl)glycinamide + (6R)-10-formyltetrahydrofolate = N(2)-formyl-N(1)-(5-phospho-beta-D-ribosyl)glycinamide + (6S)-5,6,7,8-tetrahydrofolate + H(+). It participates in purine metabolism; IMP biosynthesis via de novo pathway; N(2)-formyl-N(1)-(5-phospho-D-ribosyl)glycinamide from N(1)-(5-phospho-D-ribosyl)glycinamide (10-formyl THF route): step 1/1. Functionally, catalyzes the transfer of a formyl group from 10-formyltetrahydrofolate to 5-phospho-ribosyl-glycinamide (GAR), producing 5-phospho-ribosyl-N-formylglycinamide (FGAR) and tetrahydrofolate. The chain is Phosphoribosylglycinamide formyltransferase from Staphylococcus aureus (strain MRSA252).